Consider the following 276-residue polypeptide: MGQKVHPYSLRIKINRDWKSKWYFDKKLYSEILHEDFLIRRETMKFLKGIRFDISDIEIIRNNLQRVTVIISTPRPGSVIGVKGANLEKIGQLLTRKISKKINIKIKEIKKPEFDAQIVANGIAKQLENRASYRKLLKSSLLSSISKGVQGVKIKVSGRLGGAEIARSFEVKEGRIPLHTLRANIDYGFAEAQTTYGVIGVKVWLFKGEVLGKQTNSDAGQVINKKTSREKSEYFDKNRVDDKSKKVVNDDKFSRKKLEFGSKSNSSFKKKNGSDV.

The 72-residue stretch at 39-110 folds into the KH type-2 domain; sequence IRRETMKFLK…KINIKIKEIK (72 aa).

The protein belongs to the universal ribosomal protein uS3 family. Part of the 30S ribosomal subunit. Forms a tight complex with proteins S10 and S14.

Its function is as follows. Binds the lower part of the 30S subunit head. Binds mRNA in the 70S ribosome, positioning it for translation. The chain is Small ribosomal subunit protein uS3 from Borrelia turicatae (strain 91E135).